The chain runs to 293 residues: Elongation factor Ts (293 aa).

The tract at residues 79–82 (TDFV) is involved in Mg(2+) ion dislocation from EF-Tu.

It belongs to the EF-Ts family.

The protein resides in the cytoplasm. Functionally, associates with the EF-Tu.GDP complex and induces the exchange of GDP to GTP. It remains bound to the aminoacyl-tRNA.EF-Tu.GTP complex up to the GTP hydrolysis stage on the ribosome. The polypeptide is Elongation factor Ts (tsf) (Halalkalibacterium halodurans (strain ATCC BAA-125 / DSM 18197 / FERM 7344 / JCM 9153 / C-125) (Bacillus halodurans)).